The primary structure comprises 697 residues: uncharacterized protein (697 aa).

Transmembrane regions (helical) follow at residues 45 to 65, 86 to 106, 128 to 148, 198 to 218, and 280 to 300; these read LCAV…LALL, TVAA…MGVV, VVVS…GMLA, VLLG…WWAL, and HLAI…ILAG. 2 ABC transporter domains span residues 251 to 473 and 477 to 696; these read VRLD…QPQH and LELV…AGGM. ATP is bound by residues 285–292 and 514–521; these read GANGSGKT and GGNGSGKS. The helical transmembrane segment at 522-542 threads the bilayer; that stretch reads TLAWIMAGLTIPTTGACLLDG.

It belongs to the ABC transporter superfamily.

It is found in the cell membrane. This is an uncharacterized protein from Mycobacterium tuberculosis (strain CDC 1551 / Oshkosh).